A 128-amino-acid polypeptide reads, in one-letter code: Small ribosomal subunit protein eS8 (128 aa).

This sequence belongs to the eukaryotic ribosomal protein eS8 family. In terms of assembly, part of the 30S ribosomal subunit.

This Methanococcus maripaludis (strain C5 / ATCC BAA-1333) protein is Small ribosomal subunit protein eS8.